The chain runs to 756 residues: Zinc finger and BTB domain-containing protein 49 (756 aa).

The BTB domain occupies 25 to 91 (CDCMLVVRGV…MYTSRLDLNQ (67 aa)). Disordered regions lie at residues 176–197 (APSA…GGSC), 226–290 (PSQV…LSEP), and 311–379 (SQQS…PSQA). The span at 226 to 242 (PSQVPATQQPLTRSAST) shows a compositional bias: polar residues. Composition is skewed to basic and acidic residues over residues 319 to 341 (SHPE…DAVE) and 348 to 365 (AEEK…REEE). 7 C2H2-type zinc fingers span residues 386 to 408 (YACE…KRSH), 414 to 436 (FECN…LRRH), 442 to 464 (YICE…IIIH), 470 to 492 (HLCD…KKTH), 498 to 520 (FTCD…RVRH), 526 to 548 (YSCP…VRTH), and 554 to 576 (YSCE…KRMH).

This sequence belongs to the krueppel C2H2-type zinc-finger protein family. In terms of assembly, interacts with EP300, KAT5/Tip60 and ZBTB17. The interaction with EP300 is direct and leads to synergistic induction of CDKN1A. On the CDKN1A promoter, forms a complex with ZBTB17; this interaction leads to additive CDKN1A transactivation. The interaction with ZBTB17 may block ZBTB17 repressor activity. As to expression, widely expressed, with highest levels in white adipose tissue and kidney, intermediate levels in brain, liver and heart, and lowest levels in spleen, brown adipose tissue and muscle.

It is found in the cytoplasm. The protein resides in the nucleus. Transcription factor. Inhibits cell proliferation by activating either CDKN1A/p21 transcription or RB1 transcription. In Mus musculus (Mouse), this protein is Zinc finger and BTB domain-containing protein 49 (Zbtb49).